Reading from the N-terminus, the 129-residue chain is Small ribosomal subunit protein uS11 (129 aa).

Belongs to the universal ribosomal protein uS11 family. In terms of assembly, part of the 30S ribosomal subunit. Interacts with proteins S7 and S18. Binds to IF-3.

Its function is as follows. Located on the platform of the 30S subunit, it bridges several disparate RNA helices of the 16S rRNA. Forms part of the Shine-Dalgarno cleft in the 70S ribosome. This is Small ribosomal subunit protein uS11 from Bartonella quintana (strain Toulouse) (Rochalimaea quintana).